The primary structure comprises 303 residues: MTSRTEAVKAYLLDLQDRICSALETEDGGARFVEDAWVREAGGGGRTRVIGDGKLIEKGGVNFSHVFGSGLPPSASAHRPELAGRGFEALGVSLVIHPHNPHVPTSHANVRFFIAEKEGEEAVWWFGGGFDLTPYYGNEEDCIHWHRVAEQACAPFGADVYPRYKAWCDRYFHIKHRGEPRGIGGLFFDDLNEWGFDTCFAFIRAIGDAYVDAYLPIVQRRKDTPYTAEQREFQEYRRGRYVEFNLVYDRGTLFGLQSGGRTESILMSLPPQVRWGYDWKAAPGSEEARLTEYFLQDRDWLAH.

Ser93 is a binding site for substrate. Residues His97 and His107 each coordinate a divalent metal cation. Catalysis depends on His107, which acts as the Proton donor. 109–111 (NVR) contacts substrate. A divalent metal cation-binding residues include His146 and His176. An important for dimerization region spans residues 241–276 (YVEFNLVYDRGTLFGLQSGGRTESILMSLPPQVRWG). 259-261 (GGR) contacts substrate.

The protein belongs to the aerobic coproporphyrinogen-III oxidase family. In terms of assembly, homodimer. Requires a divalent metal cation as cofactor.

It is found in the cytoplasm. It carries out the reaction coproporphyrinogen III + O2 + 2 H(+) = protoporphyrinogen IX + 2 CO2 + 2 H2O. It functions in the pathway porphyrin-containing compound metabolism; protoporphyrin-IX biosynthesis; protoporphyrinogen-IX from coproporphyrinogen-III (O2 route): step 1/1. Its function is as follows. Involved in the heme biosynthesis. Catalyzes the aerobic oxidative decarboxylation of propionate groups of rings A and B of coproporphyrinogen-III to yield the vinyl groups in protoporphyrinogen-IX. The chain is Oxygen-dependent coproporphyrinogen-III oxidase from Pseudomonas putida (strain W619).